The following is a 271-amino-acid chain: ATP synthase subunit delta (271 aa).

Belongs to the ATPase delta chain family. F-type ATPases have 2 components, F(1) - the catalytic core - and F(0) - the membrane proton channel. F(1) has five subunits: alpha(3), beta(3), gamma(1), delta(1), epsilon(1). F(0) has three main subunits: a(1), b(2) and c(10-14). The alpha and beta chains form an alternating ring which encloses part of the gamma chain. F(1) is attached to F(0) by a central stalk formed by the gamma and epsilon chains, while a peripheral stalk is formed by the delta and b chains.

It localises to the cell membrane. Its function is as follows. F(1)F(0) ATP synthase produces ATP from ADP in the presence of a proton or sodium gradient. F-type ATPases consist of two structural domains, F(1) containing the extramembraneous catalytic core and F(0) containing the membrane proton channel, linked together by a central stalk and a peripheral stalk. During catalysis, ATP synthesis in the catalytic domain of F(1) is coupled via a rotary mechanism of the central stalk subunits to proton translocation. In terms of biological role, this protein is part of the stalk that links CF(0) to CF(1). It either transmits conformational changes from CF(0) to CF(1) or is implicated in proton conduction. This chain is ATP synthase subunit delta, found in Beutenbergia cavernae (strain ATCC BAA-8 / DSM 12333 / CCUG 43141 / JCM 11478 / NBRC 16432 / NCIMB 13614 / HKI 0122).